A 434-amino-acid polypeptide reads, in one-letter code: Histidinol dehydrogenase (434 aa).

Residues Y130, Q188, and N211 each contribute to the NAD(+) site. Residues S237, Q259, and H262 each coordinate substrate. Zn(2+)-binding residues include Q259 and H262. Residues E326 and H327 each act as proton acceptor in the active site. The substrate site is built by H327, D360, E414, and H419. D360 lines the Zn(2+) pocket. A Zn(2+)-binding site is contributed by H419.

The protein belongs to the histidinol dehydrogenase family. In terms of assembly, homodimer. Requires Zn(2+) as cofactor.

The enzyme catalyses L-histidinol + 2 NAD(+) + H2O = L-histidine + 2 NADH + 3 H(+). Its pathway is amino-acid biosynthesis; L-histidine biosynthesis; L-histidine from 5-phospho-alpha-D-ribose 1-diphosphate: step 9/9. Its function is as follows. Catalyzes the sequential NAD-dependent oxidations of L-histidinol to L-histidinaldehyde and then to L-histidine. The protein is Histidinol dehydrogenase of Salmonella paratyphi A (strain ATCC 9150 / SARB42).